Reading from the N-terminus, the 271-residue chain is Acetyl-coenzyme A carboxylase carboxyl transferase subunit beta (271 aa).

The region spanning 21–271 (LWIQCPYCKQ…LGDLLALHTA (251 aa)) is the CoA carboxyltransferase N-terminal domain. Cys25, Cys28, Cys43, and Cys46 together coordinate Zn(2+). The C4-type zinc finger occupies 25–46 (CPYCKQGSYRESLGNAQVCPHC).

It belongs to the AccD/PCCB family. Acetyl-CoA carboxylase is a heterohexamer composed of biotin carboxyl carrier protein (AccB), biotin carboxylase (AccC) and two subunits each of ACCase subunit alpha (AccA) and ACCase subunit beta (AccD). Requires Zn(2+) as cofactor.

The protein localises to the cytoplasm. The enzyme catalyses N(6)-carboxybiotinyl-L-lysyl-[protein] + acetyl-CoA = N(6)-biotinyl-L-lysyl-[protein] + malonyl-CoA. Its pathway is lipid metabolism; malonyl-CoA biosynthesis; malonyl-CoA from acetyl-CoA: step 1/1. In terms of biological role, component of the acetyl coenzyme A carboxylase (ACC) complex. Biotin carboxylase (BC) catalyzes the carboxylation of biotin on its carrier protein (BCCP) and then the CO(2) group is transferred by the transcarboxylase to acetyl-CoA to form malonyl-CoA. This chain is Acetyl-coenzyme A carboxylase carboxyl transferase subunit beta, found in Lacticaseibacillus paracasei (strain ATCC 334 / BCRC 17002 / CCUG 31169 / CIP 107868 / KCTC 3260 / NRRL B-441) (Lactobacillus paracasei).